A 373-amino-acid polypeptide reads, in one-letter code: Ferroptosis suppressor protein 1 (373 aa).

Glycine 2 carries N-myristoyl glycine lipidation. The helical transmembrane segment at 7-27 threads the bilayer; the sequence is VESGALHVVIVGGGFGGIAAA. Residues 18–22, arginine 54, and valine 82 contribute to the 6-hydroxy-FAD site; that span reads GGGFG. Position 168 is an N6-acetyllysine; by KAT2B (lysine 168). 6-hydroxy-FAD is bound at residue aspartate 285.

The protein belongs to the FAD-dependent oxidoreductase family. As to quaternary structure, interacts with importin subunits KPNA2 and IPO5; this interaction likely mediates the translocation into the nucleus upon oxidative stress. 6-hydroxy-FAD is required as a cofactor. Post-translationally, N-myristoylation at Gly-2 mediates the recruitment to lipid droplets and plasma membrane, enabling its anti-lipid peroxidation activity. Acetylation at Lys-168 prevents AIFM2 ubiquitination and degradation, thereby inhibiting ferroptosis. KAT2B mediates acetylation at Lys-168, while HDAC3 removes it. In terms of processing, ubiquitinated. AIFM2 undergoes 'Lys-29'-ubiquitination and proteasomal degradation, which is inhibited by acetylation at Lys-168. Detected in most normal tissues as two transcripts of 1.8 and 4.0 kb in length, respectively. Highly expressed in heart, moderately in liver and skeletal muscles, and expressed at low levels in placenta, lung, kidney, and pancreas. Both transcripts expressed following p53/TP53 induction. The shorter 1.8 kb transcript seems to be the major transcript in EB1 colon cancer cells.

Its subcellular location is the lipid droplet. The protein resides in the cell membrane. The protein localises to the cytoplasm. It localises to the mitochondrion membrane. It is found in the nucleus. It catalyses the reaction ubiquinone-10 + NADH + H(+) = ubiquinol-10 + NAD(+). The enzyme catalyses phylloquinone + NADH + H(+) = phylloquinol + NAD(+). It carries out the reaction menaquinone-4 + NADH + H(+) = menaquinol-4 + NAD(+). The catalysed reaction is menadione + NADH + H(+) = menadiol + NAD(+). Its activity is regulated as follows. The modification by 4-hydroxy-2-nonenal (HNE) adduction in mitochondria results in loss of the oxidoreductase activity and activation of a novel function in mitochondrial oxidative stress signaling. An NAD(P)H-dependent oxidoreductase that acts as a key inhibitor of ferroptosis. At the plasma membrane, catalyzes reduction of coenzyme Q/ubiquinone-10 to ubiquinol-10, a lipophilic radical-trapping antioxidant that prevents lipid oxidative damage and consequently ferroptosis. Acts in parallel to GPX4 to suppress phospholipid peroxidation and ferroptosis. This anti-ferroptotic function is independent of cellular glutathione levels. Also acts as a potent radical-trapping antioxidant by mediating warfarin-resistant vitamin K reduction in the canonical vitamin K cycle: catalyzes NAD(P)H-dependent reduction of vitamin K (phylloquinone, menaquinone-4 and menadione) to hydroquinone forms. Hydroquinones act as potent radical-trapping antioxidants inhibitor of phospholipid peroxidation and ferroptosis. May play a role in mitochondrial stress signaling. Upon oxidative stress, associates with the lipid peroxidation end product 4-hydroxy-2-nonenal (HNE) forming a lipid adduct devoid of oxidoreductase activity, which then translocates from mitochondria into the nucleus triggering DNA damage and cell death. Capable of DNA binding in a non-sequence specific way. The protein is Ferroptosis suppressor protein 1 of Homo sapiens (Human).